A 241-amino-acid chain; its full sequence is 1-(5-phosphoribosyl)-5-[(5-phosphoribosylamino)methylideneamino] imidazole-4-carboxamide isomerase (241 aa).

The active-site Proton acceptor is the aspartate 11. Aspartate 130 functions as the Proton donor in the catalytic mechanism.

This sequence belongs to the HisA/HisF family.

The protein localises to the cytoplasm. It catalyses the reaction 1-(5-phospho-beta-D-ribosyl)-5-[(5-phospho-beta-D-ribosylamino)methylideneamino]imidazole-4-carboxamide = 5-[(5-phospho-1-deoxy-D-ribulos-1-ylimino)methylamino]-1-(5-phospho-beta-D-ribosyl)imidazole-4-carboxamide. Its pathway is amino-acid biosynthesis; L-histidine biosynthesis; L-histidine from 5-phospho-alpha-D-ribose 1-diphosphate: step 4/9. This chain is 1-(5-phosphoribosyl)-5-[(5-phosphoribosylamino)methylideneamino] imidazole-4-carboxamide isomerase, found in Acidothermus cellulolyticus (strain ATCC 43068 / DSM 8971 / 11B).